The chain runs to 181 residues: Coatomer subunit zeta-3 (181 aa).

Belongs to the adaptor complexes small subunit family. As to quaternary structure, oligomeric complex that consists of at least the alpha, beta, beta', gamma, delta, epsilon and zeta subunits.

It localises to the cytoplasm. The protein localises to the golgi apparatus membrane. Its subcellular location is the cytoplasmic vesicle. It is found in the COPI-coated vesicle membrane. The coatomer is a cytosolic protein complex that binds to dilysine motifs and reversibly associates with Golgi non-clathrin-coated vesicles, which further mediate biosynthetic protein transport from the ER, via the Golgi up to the trans Golgi network. Coatomer complex is required for budding from Golgi membranes, and is essential for the retrograde Golgi-to-ER transport of dilysine-tagged proteins. The zeta subunit may be involved in regulating the coat assembly and, hence, the rate of biosynthetic protein transport due to its association-dissociation properties with the coatomer complex. This is Coatomer subunit zeta-3 from Arabidopsis thaliana (Mouse-ear cress).